The following is a 681-amino-acid chain: Transmembrane protein 214-A (681 aa).

Disordered regions lie at residues 1 to 41 (MASG…GTAP) and 58 to 99 (KKQN…GSRQ). N-linked (GlcNAc...) asparagine glycosylation is found at Asn-300 and Asn-324. 2 helical membrane-spanning segments follow: residues 471 to 491 (GFPW…FVFY) and 608 to 628 (LLLH…EAAV).

Belongs to the TMEM214 family. In terms of assembly, constitutively interacts with CASP4; required for the localization of procaspase 4 to the ER.

The protein resides in the endoplasmic reticulum membrane. In terms of biological role, critical mediator, in cooperation with CASP4, of endoplasmic reticulum-stress induced apoptosis. Required or the activation of CASP4 following endoplasmic reticulum stress. In Xenopus laevis (African clawed frog), this protein is Transmembrane protein 214-A (tmem214-a).